The chain runs to 545 residues: Cannabidiolic acid synthase-like 2 (545 aa).

A signal peptide spans 1 to 28 (MKCSTFCFWYVCKIIFFFLSFNIQISIA). A disulfide bond links cysteine 37 and cysteine 99. N-linked (GlcNAc...) asparagine glycosylation is found at asparagine 45, asparagine 65, asparagine 89, and asparagine 168. The FAD-binding PCMH-type domain occupies 77 to 251 (TTPKPLVITT…AAWKIRLVAV (175 aa)). Positions 114–176 (HDAEGMSYIS…ENLSFPAGYC (63 aa)) form a cross-link, 6-(S-cysteinyl)-8alpha-(pros-histidyl)-FAD (His-Cys). Histidine 292 contributes to the substrate binding site. 4 N-linked (GlcNAc...) asparagine glycosylation sites follow: asparagine 297, asparagine 305, asparagine 329, and asparagine 361. Tyrosine 417 is a binding site for substrate. Residue asparagine 467 is glycosylated (N-linked (GlcNAc...) asparagine). Tyrosine 484 serves as the catalytic Proton acceptor. A glycan (N-linked (GlcNAc...) asparagine) is linked at asparagine 499.

This sequence belongs to the oxygen-dependent FAD-linked oxidoreductase family. FAD is required as a cofactor. The FAD cofactor is bound via a bicovalent 6-S-cysteinyl, 8alpha-N1-histidyl FAD linkage.

The protein localises to the secreted. In terms of biological role, has no cannabidiolic acid synthase activity. This Cannabis sativa (Hemp) protein is Cannabidiolic acid synthase-like 2 (CBDAS3).